The primary structure comprises 691 residues: Calcium-binding and coiled-coil domain-containing protein 1 (691 aa).

Residues Met1 to Val30 form a p300 KIX-binding region. The tract at residues Met1 to Thr190 is N-terminal AD (CTNNB1 binding site). Phosphoserine is present on Ser4. An interaction with GATA1 region spans residues Ser45–Asp125. Coiled-coil stretches lie at residues Lys145–Ile205, Glu232–Glu339, and Gln417–Lys514. The tract at residues Arg501–Glu691 is C-terminal AD (CTNNB1 binding site); interaction with CCAR1. Positions Glu513 to Ser604 are disordered. A UBZ1-type zinc finger spans residues Trp653 to His679. Zn(2+)-binding residues include Cys656, Cys659, His675, and His679.

The protein belongs to the CALCOCO family. Part of a calphoglin complex consisting of CALCOCO1, PPA1 and PGM. Interacts with the bHLH-PAS domains of GRIP1, AHR and ARNT. Interacts with CTNNB1 via both its N- and C-terminal regions. Interacts with EP300. Interacts with CCAR1 (via N-terminus) and GATA1.

The protein resides in the cytoplasm. The protein localises to the nucleus. Its function is as follows. Functions as a coactivator for aryl hydrocarbon and nuclear receptors (NR). Recruited to promoters through its contact with the N-terminal basic helix-loop-helix-Per-Arnt-Sim (PAS) domain of transcription factors or coactivators, such as NCOA2. During ER-activation acts synergistically in combination with other NCOA2-binding proteins, such as EP300, CREBBP and CARM1. Involved in the transcriptional activation of target genes in the Wnt/CTNNB1 pathway. Functions as a secondary coactivator in LEF1-mediated transcriptional activation via its interaction with CTNNB1. Coactivator function for nuclear receptors and LEF1/CTNNB1 involves differential utilization of two different activation regions. In association with CCAR1 enhances GATA1- and MED1-mediated transcriptional activation from the gamma-globin promoter during erythroid differentiation of K562 erythroleukemia cells. Functionally, seems to enhance inorganic pyrophosphatase thus activating phosphogluomutase (PMG). Probably functions as a component of the calphoglin complex, which is involved in linking cellular metabolism (phosphate and glucose metabolism) with other core functions including protein synthesis and degradation, calcium signaling and cell growth. This Pongo abelii (Sumatran orangutan) protein is Calcium-binding and coiled-coil domain-containing protein 1 (CALCOCO1).